The sequence spans 295 residues: MSASESEIQARLLAQALPYMQRYENKTIVVKYGGHAMGNAELGRAFASDVALLKQSGVNPIVVHGGGPQIGAMLNKMGIESKFEGGLRVTDEKTVEIVEMVLAGSINKEIVALINQTGEWAIGLCGKDGNMVFAEKAKKTIRDPDSNIERVLDLGFVGDVVEVDRTLLDLLARSEMIPVIAPVAPGRDGHTYNINADTFAGAIAGALNATRLLFLTDVPGVLNKKGELIKQLSVAEARALIADGTISGGMIPKVETCIEAIGAGVQGVVILNGKTAHAVLLEIFTEHGAGTLIVP.

Substrate contacts are provided by residues 66-67 (GG), arginine 88, and asparagine 193.

This sequence belongs to the acetylglutamate kinase family. ArgB subfamily.

Its subcellular location is the cytoplasm. The enzyme catalyses N-acetyl-L-glutamate + ATP = N-acetyl-L-glutamyl 5-phosphate + ADP. Its pathway is amino-acid biosynthesis; L-arginine biosynthesis; N(2)-acetyl-L-ornithine from L-glutamate: step 2/4. Catalyzes the ATP-dependent phosphorylation of N-acetyl-L-glutamate. The sequence is that of Acetylglutamate kinase from Sinorhizobium medicae (strain WSM419) (Ensifer medicae).